Consider the following 785-residue polypeptide: MSEFWNNNKDTIGAGLKTVGKYSYKSTKFVAKTGYQAGKSHYQNSKAKREGRSQEGSDDSGQTTPNVHINYKDPSAFPPPPVKPGQLQYHGSSGNSANGSSATIPTLSNTNNTAQLNEQPYMNQINSSNQIYSRPQMAIPEQQVATPEQQMNSTTLPSQPQMAVPSQQEHIHIQPSNPQQLPSNYKPQEQYLQSEQLNISDRHAPQPMERPAMPLPQHGNVPPLTTENVHPNIEADISSPAVGPQFEVKPYDWEEQKTTKIEIPQVDLTSIPPPPTHRDRNTSRQGSNSTPPSRTHTGNNTSTASVTTTGIVDGNLESNQEHTPKPAILGEYDDTLNVAYAPPPKPFRRATNNSSDLKLSGAQNTKTPPPPVVLTNKSAERPNSSNVMPSLPLRQMNTKANSSENLPKAKILGEYETNVDVGIAPPPRPTYRKTDTEANPPNRPLSRSTTEHKMSSISRDNYNSIKSSSVKPPVPKRNTGEREGAQELKADIAERSQEITPTPGISGIYNLDKKIDFAPPPKPFRRAQTSSDIPQKSSLVTDESNISVPNKSQQPMQEKDSIKNATPLYIPPSNNINFPPPPKPHNKSLEESHTPSNKLSEKPKPPKKPEQLKDLNLSTQQADKNMKNKDQLFDNKNELLSTIKNKKRPAPIPKPKPKSLTSEGNHMNLNTEKGKETTIEKPDESKFLPISSFPPPPKPFKREELSKEVVDSVGETADFTKPKRAGQLESTQTEKSNSKGKAPPPVPKKRNAQSKSSPSLEGSEDNPFSKYLKDAVPNEPDRLHK.

Disordered regions lie at residues 33–122, 142–406, and 418–785; these read TGYQ…QPYM, QQVA…SENL, and NVDV…RLHK. Residues 91–102 show a composition bias toward low complexity; that stretch reads GSSGNSANGSSA. Polar residues-rich tracts occupy residues 103-122 and 143-199; these read TIPT…QPYM and QVAT…QLNI. Positions 249-260 are enriched in basic and acidic residues; sequence KPYDWEEQKTTK. 5 stretches are compositionally biased toward polar residues: residues 283-310, 350-366, 375-388, 395-405, and 455-465; these read SRQG…TTTG, ATNN…QNTK, TNKS…SNVM, QMNTKANSSEN, and SSISRDNYNSI. Residues 478–497 are compositionally biased toward basic and acidic residues; that stretch reads NTGEREGAQELKADIAERSQ. The span at 527 to 556 shows a compositional bias: polar residues; it reads AQTSSDIPQKSSLVTDESNISVPNKSQQPM. 2 stretches are compositionally biased toward basic and acidic residues: residues 587-613 and 624-637; these read KSLE…EQLK and KNMK…DNKN. Residues 659–671 are compositionally biased toward polar residues; the sequence is SLTSEGNHMNLNT. 2 stretches are compositionally biased toward basic and acidic residues: residues 672–686 and 700–710; these read EKGK…DESK and FKREELSKEVV.

The protein belongs to the AIM3 family.

Its subcellular location is the membrane raft. The sequence is that of Altered inheritance of mitochondria protein 3-2 (AIM3-2) from Candida glabrata (strain ATCC 2001 / BCRC 20586 / JCM 3761 / NBRC 0622 / NRRL Y-65 / CBS 138) (Yeast).